The sequence spans 180 residues: Peroxisome assembly protein 22 (180 aa).

Residues 15–32 (LGIVGTAIAVLVTSYYIY) form a helical membrane-spanning segment.

It belongs to the peroxin-22 family.

It is found in the peroxisome membrane. Its function is as follows. Involved in peroxisome biogenesis. The polypeptide is Peroxisome assembly protein 22 (PEX22) (Saccharomyces cerevisiae (strain ATCC 204508 / S288c) (Baker's yeast)).